Reading from the N-terminus, the 160-residue chain is UPF0178 protein PLES_56411 (160 aa).

Belongs to the UPF0178 family.

In Pseudomonas aeruginosa (strain LESB58), this protein is UPF0178 protein PLES_56411.